A 163-amino-acid polypeptide reads, in one-letter code: Sperm surface protein Sp17 (163 aa).

Disordered stretches follow at residues 57–115 (PAEW…EKEE) and 129–163 (VARE…THEK). Basic and acidic residues-rich tracts occupy residues 62-98 (SKVE…KEEE) and 129-139 (VAREEVKKMKT). The 30-residue stretch at 114–143 (EEVAAVKIQAAFRGHVAREEVKKMKTDSLQ) folds into the IQ domain. A compositionally biased stretch (polar residues) spans 153–163 (DTGFTSRTHEK).

As to quaternary structure, homodimer. May interact with ROPN1. In terms of tissue distribution, testis- and sperm-specific.

It localises to the membrane. Its function is as follows. Sperm surface zona pellucida binding protein. Helps to bind spermatozoa to the zona pellucida with high affinity. Might function in binding zona pellucida and carbohydrates. The protein is Sperm surface protein Sp17 (SPA17) of Papio hamadryas (Hamadryas baboon).